The following is a 242-amino-acid chain: Uridylate kinase (242 aa).

16–19 is an ATP binding site; it reads KVSG. Gly-58 contacts UMP. Residues Gly-59 and Arg-63 each coordinate ATP. Residues Asp-78 and 139–146 each bind UMP; that span reads TGNPFCTT. 4 residues coordinate ATP: Thr-166, Gln-167, Tyr-172, and Asp-175.

This sequence belongs to the UMP kinase family. As to quaternary structure, homohexamer.

Its subcellular location is the cytoplasm. It carries out the reaction UMP + ATP = UDP + ADP. It functions in the pathway pyrimidine metabolism; CTP biosynthesis via de novo pathway; UDP from UMP (UMPK route): step 1/1. With respect to regulation, inhibited by UTP. In terms of biological role, catalyzes the reversible phosphorylation of UMP to UDP. In Rickettsia canadensis (strain McKiel), this protein is Uridylate kinase.